A 445-amino-acid chain; its full sequence is Glutamate-1-semialdehyde 2,1-aminomutase (445 aa).

N6-(pyridoxal phosphate)lysine is present on Lys263.

It belongs to the class-III pyridoxal-phosphate-dependent aminotransferase family. HemL subfamily. Requires pyridoxal 5'-phosphate as cofactor.

The protein localises to the cytoplasm. The catalysed reaction is (S)-4-amino-5-oxopentanoate = 5-aminolevulinate. The protein operates within porphyrin-containing compound metabolism; protoporphyrin-IX biosynthesis; 5-aminolevulinate from L-glutamyl-tRNA(Glu): step 2/2. The sequence is that of Glutamate-1-semialdehyde 2,1-aminomutase from Haloarcula marismortui (strain ATCC 43049 / DSM 3752 / JCM 8966 / VKM B-1809) (Halobacterium marismortui).